We begin with the raw amino-acid sequence, 553 residues long: Putative transport protein YidE (553 aa).

Transmembrane regions (helical) follow at residues 4–24, 28–48, 65–85, 95–115, and 158–178; these read IALTVSILALVAVVGLFIGNV, GIGLGIGGVLFGGIIVGHFVS, FGLILFVYTIGIQVGPGFFAS, LFAVLIVIIGGLVTAILHKLF, and MSYAMAYPFGICGILFTMWML. RCK C-terminal domains follow at residues 191 to 276 and 279 to 361; these read QQHE…VIGQ and DTSL…VLGN. 5 helical membrane passes run 371 to 391, 394 to 414, 439 to 459, 464 to 484, and 533 to 553; these read MLPVFIGIGLGVLLGSIPVFV, FPAALKLGLAGGPLIMALILG, IVLFLSVVGLKSGGDFVNTLV, LSWIGYGALITAVPLITVGIL, and LVMFLRIITPQLLAVLFWSIG.

This sequence belongs to the AAE transporter (TC 2.A.81) family. YidE subfamily.

The protein resides in the cell membrane. The polypeptide is Putative transport protein YidE (Shigella dysenteriae serotype 1 (strain Sd197)).